The chain runs to 217 residues: Pyridoxine/pyridoxamine 5'-phosphate oxidase (217 aa).

Substrate contacts are provided by residues 13 to 16 (RRDY) and K71. FMN is bound by residues 66 to 71 (RIVLLK), 81 to 82 (YT), K88, and Q110. Substrate is bound by residues Y128, R132, and S136. FMN-binding positions include 145 to 146 (QS) and W190. Position 196 to 198 (196 to 198 (RLH)) interacts with substrate. Position 200 (R200) interacts with FMN.

This sequence belongs to the pyridoxamine 5'-phosphate oxidase family. Homodimer. Requires FMN as cofactor.

It carries out the reaction pyridoxamine 5'-phosphate + O2 + H2O = pyridoxal 5'-phosphate + H2O2 + NH4(+). The enzyme catalyses pyridoxine 5'-phosphate + O2 = pyridoxal 5'-phosphate + H2O2. Its pathway is cofactor metabolism; pyridoxal 5'-phosphate salvage; pyridoxal 5'-phosphate from pyridoxamine 5'-phosphate: step 1/1. The protein operates within cofactor metabolism; pyridoxal 5'-phosphate salvage; pyridoxal 5'-phosphate from pyridoxine 5'-phosphate: step 1/1. Catalyzes the oxidation of either pyridoxine 5'-phosphate (PNP) or pyridoxamine 5'-phosphate (PMP) into pyridoxal 5'-phosphate (PLP). This Edwardsiella ictaluri (strain 93-146) protein is Pyridoxine/pyridoxamine 5'-phosphate oxidase.